A 74-amino-acid polypeptide reads, in one-letter code: Brevinin-2Tb (74 aa).

A signal peptide spans 1-22 (MFTMKKSLLLFFFLGTISLSLC). Residues 23–40 (QEERNADEDDGEMTEEEK) constitute a propeptide that is removed on maturation. Residues cysteine 68 and cysteine 74 are joined by a disulfide bond.

This sequence belongs to the frog skin active peptide (FSAP) family. Brevinin subfamily. In terms of tissue distribution, expressed by the skin glands.

It is found in the secreted. Its function is as follows. Antimicrobial peptide. In Rana temporaria (European common frog), this protein is Brevinin-2Tb.